Consider the following 365-residue polypeptide: Cobalt-precorrin-5B C(1)-methyltransferase (365 aa).

It belongs to the CbiD family.

The catalysed reaction is Co-precorrin-5B + S-adenosyl-L-methionine = Co-precorrin-6A + S-adenosyl-L-homocysteine. Its pathway is cofactor biosynthesis; adenosylcobalamin biosynthesis; cob(II)yrinate a,c-diamide from sirohydrochlorin (anaerobic route): step 6/10. In terms of biological role, catalyzes the methylation of C-1 in cobalt-precorrin-5B to form cobalt-precorrin-6A. The chain is Cobalt-precorrin-5B C(1)-methyltransferase from Clostridium perfringens (strain 13 / Type A).